Reading from the N-terminus, the 281-residue chain is Bis(5'-nucleosyl)-tetraphosphatase, symmetrical (281 aa).

It belongs to the Ap4A hydrolase family.

The enzyme catalyses P(1),P(4)-bis(5'-adenosyl) tetraphosphate + H2O = 2 ADP + 2 H(+). In terms of biological role, hydrolyzes diadenosine 5',5'''-P1,P4-tetraphosphate to yield ADP. The polypeptide is Bis(5'-nucleosyl)-tetraphosphatase, symmetrical (Acidovorax ebreus (strain TPSY) (Diaphorobacter sp. (strain TPSY))).